A 753-amino-acid polypeptide reads, in one-letter code: 5-methyltetrahydropteroyltriglutamate--homocysteine methyltransferase (753 aa).

5-methyltetrahydropteroyltri-L-glutamate contacts are provided by residues 17–20 and Lys117; that span reads RELK. L-homocysteine-binding positions include 431–433 and Glu484; that span reads IGS. L-methionine contacts are provided by residues 431–433 and Glu484; that span reads IGS. 5-methyltetrahydropteroyltri-L-glutamate-binding positions include 515 to 516 and Trp561; that span reads RC. L-homocysteine is bound at residue Asp599. Asp599 contacts L-methionine. Glu605 contributes to the 5-methyltetrahydropteroyltri-L-glutamate binding site. Residues His641, Cys643, and Glu665 each contribute to the Zn(2+) site. His694 (proton donor) is an active-site residue. Cys726 is a Zn(2+) binding site.

This sequence belongs to the vitamin-B12 independent methionine synthase family. The cofactor is Zn(2+).

The enzyme catalyses 5-methyltetrahydropteroyltri-L-glutamate + L-homocysteine = tetrahydropteroyltri-L-glutamate + L-methionine. The protein operates within amino-acid biosynthesis; L-methionine biosynthesis via de novo pathway; L-methionine from L-homocysteine (MetE route): step 1/1. Catalyzes the transfer of a methyl group from 5-methyltetrahydrofolate to homocysteine resulting in methionine formation. This Escherichia coli O6:K15:H31 (strain 536 / UPEC) protein is 5-methyltetrahydropteroyltriglutamate--homocysteine methyltransferase.